A 150-amino-acid chain; its full sequence is UPF0178 protein Ssed_1350 (150 aa).

The protein belongs to the UPF0178 family.

This chain is UPF0178 protein Ssed_1350, found in Shewanella sediminis (strain HAW-EB3).